Here is a 642-residue protein sequence, read N- to C-terminus: 1-deoxy-D-xylulose-5-phosphate synthase 2 (642 aa).

Thiamine diphosphate is bound by residues His73 and 113-115 (SHA). Asp144 provides a ligand contact to Mg(2+). Thiamine diphosphate is bound by residues 145 to 146 (GA), Asn174, Tyr285, and Glu366. Asn174 is a Mg(2+) binding site.

The protein belongs to the transketolase family. DXPS subfamily. As to quaternary structure, homodimer. Requires Mg(2+) as cofactor. It depends on thiamine diphosphate as a cofactor.

The enzyme catalyses D-glyceraldehyde 3-phosphate + pyruvate + H(+) = 1-deoxy-D-xylulose 5-phosphate + CO2. The protein operates within metabolic intermediate biosynthesis; 1-deoxy-D-xylulose 5-phosphate biosynthesis; 1-deoxy-D-xylulose 5-phosphate from D-glyceraldehyde 3-phosphate and pyruvate: step 1/1. Functionally, catalyzes the acyloin condensation reaction between C atoms 2 and 3 of pyruvate and glyceraldehyde 3-phosphate to yield 1-deoxy-D-xylulose-5-phosphate (DXP). The sequence is that of 1-deoxy-D-xylulose-5-phosphate synthase 2 from Streptomyces avermitilis (strain ATCC 31267 / DSM 46492 / JCM 5070 / NBRC 14893 / NCIMB 12804 / NRRL 8165 / MA-4680).